The primary structure comprises 363 residues: Small ribosomal subunit biogenesis GTPase RsgA (363 aa).

The CP-type G domain occupies 112–268 (HQQVIAANID…LIDTPGMREL (157 aa)). Residues 157 to 160 (TKAD) and 210 to 218 (GSSGAGKST) each bind GTP. Zn(2+)-binding residues include C291, C296, H298, and C304. A disordered region spans residues 340 to 363 (RVAQNNRGKGSGKRPASIDRPGRR).

The protein belongs to the TRAFAC class YlqF/YawG GTPase family. RsgA subfamily. Monomer. Associates with 30S ribosomal subunit, binds 16S rRNA. Zn(2+) is required as a cofactor.

It is found in the cytoplasm. Its function is as follows. One of several proteins that assist in the late maturation steps of the functional core of the 30S ribosomal subunit. Helps release RbfA from mature subunits. May play a role in the assembly of ribosomal proteins into the subunit. Circularly permuted GTPase that catalyzes slow GTP hydrolysis, GTPase activity is stimulated by the 30S ribosomal subunit. The polypeptide is Small ribosomal subunit biogenesis GTPase RsgA (Xanthomonas oryzae pv. oryzae (strain MAFF 311018)).